A 496-amino-acid chain; its full sequence is NADP-dependent glyceraldehyde-3-phosphate dehydrogenase (496 aa).

Residues R116 and 169-170 (NY) contribute to the substrate site. 3 residues coordinate NADP(+): K192, T195, and D230. 245–249 (GGDTG) is an NAD(+) binding site. The active-site Proton acceptor is the E264. 297–299 (RCT) contacts substrate. The active-site Nucleophile is the C298. E391 is a binding site for NADP(+). R451 serves as a coordination point for substrate.

The protein belongs to the aldehyde dehydrogenase family.

The protein resides in the cytoplasm. It is found in the cytosol. The enzyme catalyses D-glyceraldehyde 3-phosphate + NADP(+) + H2O = (2R)-3-phosphoglycerate + NADPH + 2 H(+). Its activity is regulated as follows. Competitive inhibition by NADPH, 3-phospho-D-glycerate and ATP. Its function is as follows. Important as a means of generating NADPH for biosynthetic reactions. May be a main source of cytosolic NADPH for mannitol biosynthesis in leaves. The polypeptide is NADP-dependent glyceraldehyde-3-phosphate dehydrogenase (Apium graveolens (Celery)).